The primary structure comprises 157 residues: Endoribonuclease YbeY (157 aa).

The Zn(2+) site is built by His113, His117, and His123.

This sequence belongs to the endoribonuclease YbeY family. Requires Zn(2+) as cofactor.

Its subcellular location is the cytoplasm. Its function is as follows. Single strand-specific metallo-endoribonuclease involved in late-stage 70S ribosome quality control and in maturation of the 3' terminus of the 16S rRNA. This chain is Endoribonuclease YbeY, found in Ehrlichia ruminantium (strain Gardel).